A 145-amino-acid polypeptide reads, in one-letter code: Small ribosomal subunit protein bS16 (145 aa).

The disordered stretch occupies residues 82-145 (IKERAATNNP…EAAAEEQTEA (64 aa)). Residues 95-115 (EPGKKAKERAEERAEKAREAA) are compositionally biased toward basic and acidic residues. The segment covering 116-137 (EAAAAAAAAPAEEAAAEAPAEA) has biased composition (low complexity).

It belongs to the bacterial ribosomal protein bS16 family.

The chain is Small ribosomal subunit protein bS16 from Novosphingobium aromaticivorans (strain ATCC 700278 / DSM 12444 / CCUG 56034 / CIP 105152 / NBRC 16084 / F199).